A 616-amino-acid polypeptide reads, in one-letter code: Proline dehydrogenase 1, mitochondrial (616 aa).

Belongs to the proline oxidase family. It depends on FAD as a cofactor.

The protein localises to the mitochondrion matrix. The catalysed reaction is L-proline + a quinone = (S)-1-pyrroline-5-carboxylate + a quinol + H(+). It functions in the pathway amino-acid degradation; L-proline degradation into L-glutamate; L-glutamate from L-proline: step 1/2. Its function is as follows. Converts proline to delta-1-pyrroline-5-carboxylate. Through proline catabolism, promotes reactive oxygen species (ROS) production and the transcription of skn-1 target genes in response to bacterial infection by P.aeruginosa. This is Proline dehydrogenase 1, mitochondrial from Caenorhabditis elegans.